The primary structure comprises 892 residues: Protein RRP6-like 3 (892 aa).

In terms of domain architecture, 3'-5' exonuclease spans 119 to 287 (YVWVETESQL…IADSLTTELK (169 aa)). Residues 350 to 436 (SLNAEELVRK…CSHLDDIYKM (87 aa)) form the HRDC domain. The disordered stretch occupies residues 785-811 (VDDSGDGTSEGDGAKELNDTQCNGNTL).

The protein resides in the cytoplasm. It is found in the cytosol. The protein is Protein RRP6-like 3 of Arabidopsis thaliana (Mouse-ear cress).